We begin with the raw amino-acid sequence, 653 residues long: Ran-binding protein 9 (653 aa).

Residues 1–21 (MSGQPPPPPPQQQPPPPPPPA) are compositionally biased toward pro residues. Residues 1–62 (MSGQPPPPPP…SAAAPFPHGD (62 aa)) form a disordered region. The segment covering 22 to 57 (SAAAPATAPPGLAVGPGPAAGVPVPGLAAGSSAAAP) has biased composition (low complexity). In terms of domain architecture, B30.2/SPRY spans 72 to 259 (LQRRLKRLYP…VDANFGQHPF (188 aa)). The LisH domain maps to 290–322 (WQTMIQKMVSSYLVHHGYCATAEAFARSTDQTV). The interaction with CALB1 stretch occupies residues 326–332 (LASIKNR). The CTLH domain maps to 328–385 (SIKNRQRIQKLVLAGRMGEAIETTQQLYPSLLERNPNLLFTLKVRQFIEMVNGTDSEV). Residue lysine 330 is modified to N6-acetyllysine. The segment at 386-422 (RCLGGRSPKSQDSYPVSPRPFSSPSMSPSHGMSIHSL) is disordered. Positions 398-421 (SYPVSPRPFSSPSMSPSHGMSIHS) are enriched in low complexity. A phosphoserine mark is found at serine 402 and serine 412. The interaction with FMR1 stretch occupies residues 539-653 (AAIERMIHFG…AFATVEDYLH (115 aa)).

Belongs to the RANBP9/10 family. In terms of assembly, part of a complex consisting of RANBP9, MKLN1 and GID8. Identified in the CTLH complex that contains GID4, RANBP9 and/or RANBP10, MKLN1, MAEA, RMND5A (or alternatively its paralog RMND5B), GID8, ARMC8, WDR26 and YPEL5. Within this complex, MAEA, RMND5A (or alternatively its paralog RMND5B), GID8, WDR26, and RANBP9 and/or RANBP10 form the catalytic core, while GID4, MKLN1, ARMC8 and YPEL5 have ancillary roles. Interacts with GTP-bound Ran, AR, CDC2L1/p110C, CALB1, S100A7, USP11, SOS1 or SOS2, GID8, and FMR1. Interacts with the Dyrk kinases HIPK2, DYRK1A, and DYRK1B. Interacts with TP73 isoform Alpha but not with TP53. Interacts with the HGF receptor MET and the integrins ITGB1 and ITGB2, but not with ITGAL. Part of a complex consisting of RANBP9, RAN, DYRK1B and COPS5. Directly interacts with RANBP10. Interacts with YPEL5. Interacts with MKLN1. Interacts with DDX4. Interacts with NGFR. Interacts with Tex19.1 and, probably, Tex19.2. Post-translationally, phosphorylated in response to stress. Ubiquitinated. Polyubiquitination targets the protein for rapid degradation via the ubiquitin system. In terms of tissue distribution, ubiquitously expressed, with highest levels in maturating spermatocytes.

It localises to the cytoplasm. The protein localises to the cell membrane. The protein resides in the nucleus. Functionally, may act as scaffolding protein, and as adapter protein to couple membrane receptors to intracellular signaling pathways. Acts as a mediator of cell spreading and actin cytoskeleton rearrangement. Core component of the CTLH E3 ubiquitin-protein ligase complex that selectively accepts ubiquitin from UBE2H and mediates ubiquitination and subsequent proteasomal degradation of the transcription factor HBP1. May be involved in signaling of ITGB2/LFA-1 and other integrins. Enhances HGF-MET signaling by recruiting Sos and activating the Ras pathway. Enhances dihydrotestosterone-induced transactivation activity of AR, as well as dexamethasone-induced transactivation activity of NR3C1, but not affect estrogen-induced transactivation. Stabilizes TP73 isoform Alpha, probably by inhibiting its ubiquitination, and increases its proapoptotic activity. Inhibits the kinase activity of DYRK1A and DYRK1B. Inhibits FMR1 binding to RNA. This Mus musculus (Mouse) protein is Ran-binding protein 9.